The sequence spans 584 residues: uncharacterized protein (584 aa).

The signal sequence occupies residues 1-27; that stretch reads MGLSRKKIFTWPLLLTGMAVVSTTFSS. Cys28 is lipidated: N-palmitoyl cysteine. A lipid anchor (S-diacylglycerol cysteine) is attached at Cys28. The segment at 530–570 is disordered; sequence NLPKKEGSTNQANQQTNQTNRSTDATKKDSSSDETNKNPLA. A compositionally biased stretch (low complexity) spans 538 to 552; the sequence is TNQANQQTNQTNRST. The span at 553-565 shows a compositional bias: basic and acidic residues; the sequence is DATKKDSSSDETN.

It belongs to the MG067/MG068/MG395 family.

It localises to the cell membrane. This is an uncharacterized protein from Mycoplasmoides gallisepticum (strain R(low / passage 15 / clone 2)) (Mycoplasma gallisepticum).